Reading from the N-terminus, the 90-residue chain is UPF0223 protein lwe1035 (90 aa).

This sequence belongs to the UPF0223 family.

The polypeptide is UPF0223 protein lwe1035 (Listeria welshimeri serovar 6b (strain ATCC 35897 / DSM 20650 / CCUG 15529 / CIP 8149 / NCTC 11857 / SLCC 5334 / V8)).